The primary structure comprises 240 residues: UDP-2,3-diacylglucosamine hydrolase (240 aa).

5 residues coordinate Mn(2+): Asp-8, His-10, Asp-41, Asn-79, and His-114. 79–80 (NR) serves as a coordination point for substrate. Asp-122, Ser-160, Asn-164, Lys-167, and His-195 together coordinate substrate. Mn(2+) contacts are provided by His-195 and His-197.

The protein belongs to the LpxH family. Requires Mn(2+) as cofactor.

The protein resides in the cell inner membrane. It catalyses the reaction UDP-2-N,3-O-bis[(3R)-3-hydroxytetradecanoyl]-alpha-D-glucosamine + H2O = 2-N,3-O-bis[(3R)-3-hydroxytetradecanoyl]-alpha-D-glucosaminyl 1-phosphate + UMP + 2 H(+). It functions in the pathway glycolipid biosynthesis; lipid IV(A) biosynthesis; lipid IV(A) from (3R)-3-hydroxytetradecanoyl-[acyl-carrier-protein] and UDP-N-acetyl-alpha-D-glucosamine: step 4/6. Its function is as follows. Hydrolyzes the pyrophosphate bond of UDP-2,3-diacylglucosamine to yield 2,3-diacylglucosamine 1-phosphate (lipid X) and UMP by catalyzing the attack of water at the alpha-P atom. Involved in the biosynthesis of lipid A, a phosphorylated glycolipid that anchors the lipopolysaccharide to the outer membrane of the cell. In Salmonella paratyphi A (strain ATCC 9150 / SARB42), this protein is UDP-2,3-diacylglucosamine hydrolase.